The following is a 470-amino-acid chain: MNGTEPAEPTNGTNATAWPAGLLLAYYGDDFTGSTDAMEAMQAAGVPTVLCLQKPTPELLARFPEVRCVGMAGSSRGRSSAWMDDELPDVLASLAALGAPILQYKVCSTFDSSPEVGSIGRAIDIGVRHMPGNWSPMVIGAPRLKRYQMFGNLFAAVDGVGYRLDRHPTMSRHPVTPMNEADLRLHLARQTARRIELIDMLELRGADVATRVRALCAPDMPVVLIDVLDEETLAEAGRLVWEQRGEGIFTASSSGLQYALAAHWRARGLLPPTPSLPAADPVQAIAAVSGSCSPVTAAQIGWARAHGFHTERLDLPRALDSRDGAAEIERVVTAATQALTRGISVIVHSAEGPDDPAVTGFDAIASAAGFARHDAARKVGRALAEVMRRLLDSVELTRVVVAGGDSSGEVASVLGIDALSVMAGLVPGAPLCRAWSAEPRRDGLQIVLKGGQIGDATFFGMVREGRLAGA.

Residues Asp-30 and Arg-78 each contribute to the substrate site. ATP is bound by residues Ser-291, 403–406 (GGDS), and Gly-451.

Belongs to the four-carbon acid sugar kinase family.

It catalyses the reaction 3-oxoisoapionate + ATP = 3-oxoisoapionate 4-phosphate + ADP + H(+). It functions in the pathway carbohydrate metabolism. In terms of biological role, involved in catabolism of D-apiose. Catalyzes the phosphorylation of 3-oxo-isoapionate to 3-oxo-isoapionate 4-phosphate. In Paraburkholderia graminis (strain ATCC 700544 / DSM 17151 / LMG 18924 / NCIMB 13744 / C4D1M), this protein is 3-oxo-isoapionate kinase.